A 345-amino-acid chain; its full sequence is Cytoskeleton protein RodZ (345 aa).

Topologically, residues 1–111 (MNTEASQDQT…LGKKHKKRDG (111 aa)) are cytoplasmic. An HTH cro/C1-type domain is found at 19-79 (LRQARESLGL…KLVHLPEDEL (61 aa)). Positions 30–49 (QQTVAERLCLKVSTIRDIEE) form a DNA-binding region, H-T-H motif. A helical; Signal-anchor for type II membrane protein transmembrane segment spans residues 112–132 (WLMSFTWLIVLVVLGLTGAWW). The Periplasmic segment spans residues 133 to 345 (WQNHQAQQAE…RVARLTVGVE (213 aa)). Positions 151 to 260 (SAQLSQNGGQ…LPTADAGVSG (110 aa)) are disordered. Positions 188–225 (PLTNHSGSAITNSATTSSVPKTTSTEPVDTANTNTTMH) are enriched in polar residues. The segment covering 229 to 241 (AASAAVSPSQVPQ) has biased composition (low complexity).

This sequence belongs to the RodZ family.

It is found in the cell inner membrane. Its function is as follows. Cytoskeletal protein that is involved in cell-shape control through regulation of the length of the long axis. The chain is Cytoskeleton protein RodZ from Yersinia pestis (strain Pestoides F).